Consider the following 427-residue polypeptide: Serine/threonine-protein kinase ssn3 (427 aa).

Positions 40–369 (YHIVGFISSG…AQEALEHPYF (330 aa)) constitute a Protein kinase domain. Residues 46 to 54 (ISSGTYGRV) and lysine 70 each bind ATP. Aspartate 172 (proton acceptor) is an active-site residue. Residues 390–399 (RRVTQDDNDI) are compositionally biased toward basic and acidic residues. The tract at residues 390-427 (RRVTQDDNDIRSGSLPGTKRSGLPDDSLLGRATKRLKE) is disordered.

Belongs to the protein kinase superfamily. CMGC Ser/Thr protein kinase family. CDC2/CDKX subfamily. Component of the srb8-11 complex, a regulatory module of the Mediator complex. Mg(2+) is required as a cofactor.

Its subcellular location is the nucleus. It carries out the reaction L-seryl-[protein] + ATP = O-phospho-L-seryl-[protein] + ADP + H(+). It catalyses the reaction L-threonyl-[protein] + ATP = O-phospho-L-threonyl-[protein] + ADP + H(+). The enzyme catalyses [DNA-directed RNA polymerase] + ATP = phospho-[DNA-directed RNA polymerase] + ADP + H(+). Component of the srb8-11 complex. The srb8-11 complex is a regulatory module of the Mediator complex which is itself involved in regulation of basal and activated RNA polymerase II-dependent transcription. The srb8-11 complex may be involved in the transcriptional repression of a subset of genes regulated by Mediator. It may inhibit the association of the Mediator complex with RNA polymerase II to form the holoenzyme complex. The srb8-11 complex phosphorylates the C-terminal domain (CTD) of the largest subunit of RNA polymerase II. The sequence is that of Serine/threonine-protein kinase ssn3 (ssn3) from Aspergillus niger (strain ATCC MYA-4892 / CBS 513.88 / FGSC A1513).